We begin with the raw amino-acid sequence, 741 residues long: Phosphoribosylformylglycinamidine synthase subunit PurL (741 aa).

His53 is a catalytic residue. 2 residues coordinate ATP: Tyr56 and Lys95. Glu97 is a Mg(2+) binding site. Residues 98–101 (SHNH) and Arg120 contribute to the substrate site. The active-site Proton acceptor is the His99. Asp121 contacts Mg(2+). Substrate is bound at residue Gln244. Position 274 (Asp274) interacts with Mg(2+). 318 to 320 (ESQ) contacts substrate. ATP-binding residues include Asp501 and Gly538. Asn539 lines the Mg(2+) pocket. Residue Ser541 participates in substrate binding.

Belongs to the FGAMS family. Monomer. Part of the FGAM synthase complex composed of 1 PurL, 1 PurQ and 2 PurS subunits.

It is found in the cytoplasm. It carries out the reaction N(2)-formyl-N(1)-(5-phospho-beta-D-ribosyl)glycinamide + L-glutamine + ATP + H2O = 2-formamido-N(1)-(5-O-phospho-beta-D-ribosyl)acetamidine + L-glutamate + ADP + phosphate + H(+). Its pathway is purine metabolism; IMP biosynthesis via de novo pathway; 5-amino-1-(5-phospho-D-ribosyl)imidazole from N(2)-formyl-N(1)-(5-phospho-D-ribosyl)glycinamide: step 1/2. Part of the phosphoribosylformylglycinamidine synthase complex involved in the purines biosynthetic pathway. Catalyzes the ATP-dependent conversion of formylglycinamide ribonucleotide (FGAR) and glutamine to yield formylglycinamidine ribonucleotide (FGAM) and glutamate. The FGAM synthase complex is composed of three subunits. PurQ produces an ammonia molecule by converting glutamine to glutamate. PurL transfers the ammonia molecule to FGAR to form FGAM in an ATP-dependent manner. PurS interacts with PurQ and PurL and is thought to assist in the transfer of the ammonia molecule from PurQ to PurL. This is Phosphoribosylformylglycinamidine synthase subunit PurL from Latilactobacillus sakei subsp. sakei (strain 23K) (Lactobacillus sakei subsp. sakei).